The primary structure comprises 48 residues: Acidic phospholipase A2 (48 aa).

3 residues coordinate Ca(2+): Y27, G29, and G31. A disulfide bridge connects residues C28 and C44. The active site involves H47. D48 serves as a coordination point for Ca(2+).

The protein belongs to the phospholipase A2 family. Group II subfamily. D49 sub-subfamily. As to quaternary structure, monomer. Ca(2+) serves as cofactor. In terms of tissue distribution, expressed by the venom gland.

The protein resides in the secreted. It carries out the reaction a 1,2-diacyl-sn-glycero-3-phosphocholine + H2O = a 1-acyl-sn-glycero-3-phosphocholine + a fatty acid + H(+). Its activity is regulated as follows. Inhibited by EDTA. Inhibited by Ba(2+), Cu(+), Fe(2+) and Zn(2+) ions and, to a lesser extent, by Mn(2+) and Mg(2+) ions. Its function is as follows. Snake venom phospholipase A2 (PLA2) that shows myotoxicity and induces paw edema in mice. Exhibits indirect hemolytic activity. Inhibits platelet aggregation induced by ADP and collagen. PLA2 catalyzes the calcium-dependent hydrolysis of the 2-acyl groups in 3-sn-phosphoglycerides. The protein is Acidic phospholipase A2 of Bothrops pauloensis (Neuwied's lancehead).